The primary structure comprises 472 residues: uncharacterized protein (472 aa).

The protein localises to the mitochondrion. This is an uncharacterized protein from Saccharomyces cerevisiae (strain ATCC 204508 / S288c) (Baker's yeast).